The following is a 195-amino-acid chain: Imidazoleglycerol-phosphate dehydratase (195 aa).

The protein belongs to the imidazoleglycerol-phosphate dehydratase family.

The protein resides in the cytoplasm. The catalysed reaction is D-erythro-1-(imidazol-4-yl)glycerol 3-phosphate = 3-(imidazol-4-yl)-2-oxopropyl phosphate + H2O. It participates in amino-acid biosynthesis; L-histidine biosynthesis; L-histidine from 5-phospho-alpha-D-ribose 1-diphosphate: step 6/9. In Parafrankia sp. (strain EAN1pec), this protein is Imidazoleglycerol-phosphate dehydratase.